We begin with the raw amino-acid sequence, 840 residues long: Probable alpha-glucuronidase A (840 aa).

An N-terminal signal peptide occupies residues 1–19 (MWSGIPIFALLSSIGIAAA). Residues Asn50, Asn149, Asn222, Asn262, Asn279, Asn310, Asn465, Asn527, Asn576, Asn610, Asn682, Asn723, and Asn732 are each glycosylated (N-linked (GlcNAc...) asparagine).

Belongs to the glycosyl hydrolase 67 family.

The protein resides in the secreted. It carries out the reaction an alpha-D-glucuronoside + H2O = D-glucuronate + an alcohol. Alpha-glucuronidase involved in the hydrolysis of xylan, a major structural heterogeneous polysaccharide found in plant biomass representing the second most abundant polysaccharide in the biosphere, after cellulose. Releases 4-O-methylglucuronic acid from xylan. This is Probable alpha-glucuronidase A (aguA) from Aspergillus fumigatus (strain ATCC MYA-4609 / CBS 101355 / FGSC A1100 / Af293) (Neosartorya fumigata).